A 667-amino-acid polypeptide reads, in one-letter code: DNA ligase (667 aa).

NAD(+)-binding positions include 34-38 (DSEYD), 83-84 (SL), and E112. K114 functions as the N6-AMP-lysine intermediate in the catalytic mechanism. Positions 135, 169, 285, and 309 each coordinate NAD(+). Zn(2+) contacts are provided by C403, C406, C421, and C426. The BRCT domain occupies 589 to 667 (ASDSYFAGKT…EARLISELKK (79 aa)).

The protein belongs to the NAD-dependent DNA ligase family. LigA subfamily. Mg(2+) is required as a cofactor. It depends on Mn(2+) as a cofactor.

The catalysed reaction is NAD(+) + (deoxyribonucleotide)n-3'-hydroxyl + 5'-phospho-(deoxyribonucleotide)m = (deoxyribonucleotide)n+m + AMP + beta-nicotinamide D-nucleotide.. In terms of biological role, DNA ligase that catalyzes the formation of phosphodiester linkages between 5'-phosphoryl and 3'-hydroxyl groups in double-stranded DNA using NAD as a coenzyme and as the energy source for the reaction. It is essential for DNA replication and repair of damaged DNA. The protein is DNA ligase of Bacillus licheniformis (strain ATCC 14580 / DSM 13 / JCM 2505 / CCUG 7422 / NBRC 12200 / NCIMB 9375 / NCTC 10341 / NRRL NRS-1264 / Gibson 46).